The following is a 542-amino-acid chain: Phosphoenolpyruvate carboxykinase (ATP) (542 aa).

Positions 67, 208, and 214 each coordinate substrate. Residues Lys-214, His-233, and 249 to 257 contribute to the ATP site; that span reads GLSGTGKTT. Mn(2+)-binding residues include Lys-214 and His-233. A Mn(2+)-binding site is contributed by Asp-270. ATP contacts are provided by residues Glu-298, Arg-334, 450 to 451, and Thr-456; that span reads RI. Substrate is bound at residue Arg-334.

This sequence belongs to the phosphoenolpyruvate carboxykinase (ATP) family. Monomer. The cofactor is Mn(2+).

The protein localises to the cytoplasm. It carries out the reaction oxaloacetate + ATP = phosphoenolpyruvate + ADP + CO2. Its pathway is carbohydrate biosynthesis; gluconeogenesis. Its function is as follows. Involved in the gluconeogenesis. Catalyzes the conversion of oxaloacetate (OAA) to phosphoenolpyruvate (PEP) through direct phosphoryl transfer between the nucleoside triphosphate and OAA. The sequence is that of Phosphoenolpyruvate carboxykinase (ATP) from Vibrio cholerae serotype O1 (strain ATCC 39541 / Classical Ogawa 395 / O395).